The chain runs to 225 residues: Uridylate kinase (225 aa).

9 to 10 provides a ligand contact to ATP; it reads GS. Position 44 (glycine 44) interacts with UMP. ATP is bound by residues glycine 45 and arginine 49. UMP is bound by residues aspartate 66 and 114 to 120; that span reads THPGHTT. Residues threonine 140, asparagine 141, tyrosine 146, and aspartate 149 each contribute to the ATP site.

This sequence belongs to the UMP kinase family. As to quaternary structure, homohexamer.

The protein localises to the cytoplasm. It carries out the reaction UMP + ATP = UDP + ADP. Its pathway is pyrimidine metabolism; CTP biosynthesis via de novo pathway; UDP from UMP (UMPK route): step 1/1. Its activity is regulated as follows. Inhibited by UTP. Functionally, catalyzes the reversible phosphorylation of UMP to UDP. This Pyrococcus abyssi (strain GE5 / Orsay) protein is Uridylate kinase.